The chain runs to 817 residues: Lon protease (817 aa).

Residues 22–216 (VPIMPLSDGV…KVTRQLNHQL (195 aa)) enclose the Lon N-terminal domain. 368-375 (GPPGTGKT) contributes to the ATP binding site. The Lon proteolytic domain occupies 604–785 (ALTPGVVMGL…GDVLELALNG (182 aa)). Active-site residues include S691 and K734. A disordered region spans residues 784–817 (NGNGATKKKKKTPAKSKKSTKPAAKKTAARKSRK). Over residues 789–817 (TKKKKKTPAKSKKSTKPAAKKTAARKSRK) the composition is skewed to basic residues.

Belongs to the peptidase S16 family. In terms of assembly, homohexamer. Organized in a ring with a central cavity.

It is found in the cytoplasm. It catalyses the reaction Hydrolysis of proteins in presence of ATP.. Its function is as follows. ATP-dependent serine protease that mediates the selective degradation of mutant and abnormal proteins as well as certain short-lived regulatory proteins. Required for cellular homeostasis and for survival from DNA damage and developmental changes induced by stress. Degrades polypeptides processively to yield small peptide fragments that are 5 to 10 amino acids long. Binds to DNA in a double-stranded, site-specific manner. The polypeptide is Lon protease (Desulfosudis oleivorans (strain DSM 6200 / JCM 39069 / Hxd3) (Desulfococcus oleovorans)).